Consider the following 2547-residue polypeptide: Lovastatin diketide synthase mokB (2547 aa).

In terms of domain architecture, Ketosynthase family 3 (KS3) spans 10–430 (PTPIAVVGMG…GANAHAIVER (421 aa)). Active-site for beta-ketoacyl synthase activity residues include cysteine 183, histidine 318, and histidine 353. An acyl and malonyl transferase region spans residues 545 to 890 (VFTGQGAQWF…MDLLQGGYPV (346 aa)). Serine 635 functions as the For malonyltransferase activity in the catalytic mechanism. The interval 941 to 1079 (HDLIGVQEPL…GLIRAQVDHP (139 aa)) is N-terminal hotdog fold. Residues 941–1252 (HDLIGVQEPL…FQSLGAVISD (312 aa)) form the PKS/mFAS DH domain. Residue histidine 973 is the Proton acceptor; for dehydratase activity of the active site. The tract at residues 973-985 (HVVGSRILFPGAG) is dehydratase-like. The segment at 1095–1252 (SRKMAPQDLW…FQSLGAVISD (158 aa)) is C-terminal hotdog fold. Aspartate 1160 functions as the Proton donor; for dehydratase activity in the catalytic mechanism. A disulfide bridge connects residues cysteine 1340 and cysteine 1379. Positions 1510–1547 (YDVVLACQVLHATSNMQRTLNNVRKLLKPGGKLILVET) are methyltransferase. In terms of domain architecture, Carrier spans 2459–2541 (ASTEEEATAL…EVAEVVVKKY (83 aa)). Serine 2501 carries the O-(pantetheine 4'-phosphoryl)serine modification.

Pantetheine 4'-phosphate serves as cofactor.

The enzyme catalyses holo-[2-methylbutanoate polyketide synthase] + 2 malonyl-CoA + S-adenosyl-L-methionine + 2 NADPH + 3 H(+) = (S)-2-methylbutanoyl-[2-methylbutanoate polyketide synthase] + S-adenosyl-L-homocysteine + 2 CO2 + 2 NADP(+) + 2 CoA + H2O. It participates in polyketide biosynthesis; lovastatin biosynthesis. Diketide synthase; part of the gene cluster that mediates the biosynthesis of monakolin K, also known as lovastatin, and which acts as a potent competitive inhibitor of HMG-CoA reductase. Monakolin K biosynthesis is performed in two stages. The first stage is catalyzed by the nonaketide synthase mokA, which belongs to type I polyketide synthases and catalyzes the iterative nine-step formation of the polyketide. This PKS stage completed by the action of dehydrogenase mokE, which catalyzes the NADPH-dependent reduction of the unsaturated tetra-, penta- and heptaketide intermediates that arise during the mokA-mediated biosynthesis of the nonaketide chain and leads to dihydromonacolin L. Covalently bound dihydromonacolin L is released from mokA by the mokD esterase. Conversion of dihydromonacolin L into monacolin L and then monacolin J is subsequently performed with the participation of molecular oxygen and P450 monoogygenase mokC. Finally, mokF performs the conversion of monacoline J to monacoline K through the addition of the side-chain diketide moiety (2R)-2-methylbutanoate produced by the diketide synthase mokB. This Monascus pilosus (Red mold) protein is Lovastatin diketide synthase mokB.